The chain runs to 356 residues: Metacaspase-1 (356 aa).

The disordered stretch occupies residues 1 to 47; sequence MYSGRSGAPPPAHSPYPNSYNHGPPGHSAGHNVPPPPPTQPVQFGHG. Catalysis depends on residues histidine 147 and cysteine 203.

Belongs to the peptidase C14B family.

In terms of biological role, involved in cell death (apoptosis). In Ajellomyces capsulatus (strain NAm1 / WU24) (Darling's disease fungus), this protein is Metacaspase-1 (MCA1).